The sequence spans 287 residues: Urease accessory protein UreD (287 aa).

This sequence belongs to the UreD family. UreD, UreF and UreG form a complex that acts as a GTP-hydrolysis-dependent molecular chaperone, activating the urease apoprotein by helping to assemble the nickel containing metallocenter of UreC. The UreE protein probably delivers the nickel.

The protein resides in the cytoplasm. Its function is as follows. Required for maturation of urease via the functional incorporation of the urease nickel metallocenter. This chain is Urease accessory protein UreD, found in Aliivibrio fischeri (strain MJ11) (Vibrio fischeri).